A 378-amino-acid polypeptide reads, in one-letter code: Putative glutamate--cysteine ligase 2 (378 aa).

The protein belongs to the glutamate--cysteine ligase type 2 family. YbdK subfamily.

It catalyses the reaction L-cysteine + L-glutamate + ATP = gamma-L-glutamyl-L-cysteine + ADP + phosphate + H(+). ATP-dependent carboxylate-amine ligase which exhibits weak glutamate--cysteine ligase activity. This chain is Putative glutamate--cysteine ligase 2, found in Jannaschia sp. (strain CCS1).